The following is a 918-amino-acid chain: Signal transduction histidine-protein kinase BarA (918 aa).

The Cytoplasmic segment spans residues M1–R9. The helical transmembrane segment at M10–V31 threads the bilayer. At H32 to E176 the chain is on the periplasmic side. Residues I177–W196 traverse the membrane as a helical segment. The Cytoplasmic portion of the chain corresponds to R197–G918. Residues R200–E252 form the HAMP domain. A Histidine kinase domain is found at N299 to L520. Residue H302 is modified to Phosphohistidine; by autocatalysis. Positions T669 to K785 constitute a Response regulatory domain. D718 is subject to 4-aspartylphosphate. One can recognise an HPt domain in the interval K822–G918. H861 is modified (phosphohistidine).

Activation requires a sequential transfer of a phosphate group from a His in the primary transmitter domain, to an Asp in the receiver domain and to a His in the secondary transmitter domain.

It localises to the cell inner membrane. It carries out the reaction ATP + protein L-histidine = ADP + protein N-phospho-L-histidine.. Its function is as follows. Member of the two-component regulatory system UvrY/BarA involved in the regulation of carbon metabolism via the CsrA/CsrB regulatory system. Phosphorylates UvrY, probably via a four-step phosphorelay. This Escherichia coli O157:H7 protein is Signal transduction histidine-protein kinase BarA (barA).